We begin with the raw amino-acid sequence, 498 residues long: MPTPSAPSPQPKGFRRAVSEQDAKQAEAVTSPRFIGRRQSLIEDARKEREAAAAAAAAAVASSEPGNPLEAVVFEERDGNAVLNLLFSLRGTKPSSLSRAVKVFETFEAKIHHLETRPAQRPLAGSPHLEYFVRFEVPSGDLAALLSSVRRVSDDVRSAREDKVPWFPRKVSELDKCHHLVTKFDPDLDLDHPGFSDQVYRQRRKLIAEIAFQYKHGEPIPHVEYTAEEIATWKEVYVTLKGLYATHACREHLEGFQLLERYCGYREDSIPQLEDVSRFLKERTGFQLRPVAGLLSARDFLASLAFRVFQCTQYIRHASSPMHSPEPDCCHELLGHVPMLADRTFAQFSQDIGLASLGASDEEIEKLSTVYWFTVEFGLCKQNGELKAYGAGLLSSYGELLHSLSEEPEVRAFDPDTAAVQPYQDQTYQPVYFVSESFNDAKDKLRNYASRIQRPFSVKFDPYTLAIDVLDSPHTIQRSLEGVQDELHTLAHALSAIS.

Pro residues predominate over residues 1-10; the sequence is MPTPSAPSPQ. Positions 1-31 are disordered; sequence MPTPSAPSPQPKGFRRAVSEQDAKQAEAVTS. S19 carries the phosphoserine; by CaMK2 modification. S31 carries the post-translational modification Phosphoserine. S40 bears the Phosphoserine; by CaMK2 and PKA mark. H331, H336, and E376 together coordinate Fe cation. Position 472 is a phosphoserine (S472).

This sequence belongs to the biopterin-dependent aromatic amino acid hydroxylase family. In terms of assembly, homotetramer. Interacts (when phosphorylated at Ser-19) with YWHAG; one YWHAG dimer binds to one TH tetramer and this interaction may influence the phosphorylation and dephosphorylation of other sites. Interacts with NT5DC2; the interaction results in reduced phosphorylation and decreased catalytic activity of TH. It depends on Fe(2+) as a cofactor. Post-translationally, phosphorylated on Ser-19, Ser-31 and Ser-40 by several protein kinases with different site specificities. Phosphorylation at Ser-31 and Ser-40 leads to an increase of TH activity. Phosphorylation at Ser-40 activates the enzyme and also counteracts the feedback inhibition of TH by catecholamines. Phosphorylation of Ser-19 and Ser-31 triggers the proteasomal degradation of TH through the ubiquitin-proteasome pathway. Phosphorylation at Ser-31 facilitates transport of TH from the soma to the nerve terminals via the microtubule network. Phosphorylation at Ser-19 induces the high-affinity binding to the 14-3-3 protein YWHAG; this interaction may influence the phosphorylation and dephosphorylation of other sites. Ser-19 increases the phosphorylation at Ser-40 in a hierarchical manner, leading to increased activity.

The protein resides in the cytoplasm. Its subcellular location is the perinuclear region. It is found in the nucleus. The protein localises to the cell projection. It localises to the axon. The protein resides in the cytoplasmic vesicle. Its subcellular location is the secretory vesicle. It is found in the synaptic vesicle. It carries out the reaction (6R)-L-erythro-5,6,7,8-tetrahydrobiopterin + L-tyrosine + O2 = (4aS,6R)-4a-hydroxy-L-erythro-5,6,7,8-tetrahydrobiopterin + L-dopa. Its pathway is catecholamine biosynthesis; dopamine biosynthesis; dopamine from L-tyrosine: step 1/2. With respect to regulation, inhibited in feedback fashion by the catecholamine neurotransmitters, especially by dopamine in competition with tetrahydrobiopterin. Phosphorylation of several Ser/Thr residues in the N-terminus regulates the catalytic activity. Ser-31 and Ser-40 are readily phosphorylated to activate the catalytic activity. A cysteine modification induced by N-ethylmaleimide (NEM), inhibits tyrosine 3-monooxygenase activity through the modification of the Cys-177. In terms of biological role, catalyzes the conversion of L-tyrosine to L-dihydroxyphenylalanine (L-Dopa), the rate-limiting step in the biosynthesis of catecholamines, dopamine, noradrenaline, and adrenaline. Uses tetrahydrobiopterin and molecular oxygen to convert tyrosine to L-Dopa. In addition to tyrosine, is able to catalyze the hydroxylation of phenylalanine and tryptophan but with lower specificity. Positively regulates the regression of retinal hyaloid vessels during postnatal development. This is Tyrosine 3-monooxygenase (Th) from Rattus norvegicus (Rat).